Here is a 119-residue protein sequence, read N- to C-terminus: Large ribosomal subunit protein bL20 (119 aa).

The protein belongs to the bacterial ribosomal protein bL20 family.

Its function is as follows. Binds directly to 23S ribosomal RNA and is necessary for the in vitro assembly process of the 50S ribosomal subunit. It is not involved in the protein synthesizing functions of that subunit. The chain is Large ribosomal subunit protein bL20 from Aromatoleum aromaticum (strain DSM 19018 / LMG 30748 / EbN1) (Azoarcus sp. (strain EbN1)).